Here is a 75-residue protein sequence, read N- to C-terminus: MGELVKTIAKALVDNPDAVEVNEIHGHQSIIIELKVAPEDMGKVIGKQGRIAQAIRTLVKAAALKEKKRVIVEII.

Residues 29-75 (SIIIELKVAPEDMGKVIGKQGRIAQAIRTLVKAAALKEKKRVIVEII) form the KH domain.

This sequence belongs to the KhpA RNA-binding protein family. In terms of assembly, forms a complex with KhpB.

It localises to the cytoplasm. In terms of biological role, a probable RNA chaperone. Forms a complex with KhpB which binds to cellular RNA and controls its expression. Plays a role in peptidoglycan (PG) homeostasis and cell length regulation. The protein is RNA-binding protein KhpA of Caldanaerobacter subterraneus subsp. tengcongensis (strain DSM 15242 / JCM 11007 / NBRC 100824 / MB4) (Thermoanaerobacter tengcongensis).